A 540-amino-acid chain; its full sequence is Chaperonin GroEL (540 aa).

ATP contacts are provided by residues 30–33 (TLGP), 87–91 (DGTTT), Gly414, 479–481 (NAL), and Asp495.

It belongs to the chaperonin (HSP60) family. In terms of assembly, forms a cylinder of 14 subunits composed of two heptameric rings stacked back-to-back. Interacts with the co-chaperonin GroES.

Its subcellular location is the cytoplasm. It catalyses the reaction ATP + H2O + a folded polypeptide = ADP + phosphate + an unfolded polypeptide.. In terms of biological role, together with its co-chaperonin GroES, plays an essential role in assisting protein folding. The GroEL-GroES system forms a nano-cage that allows encapsulation of the non-native substrate proteins and provides a physical environment optimized to promote and accelerate protein folding. The chain is Chaperonin GroEL from Rubrobacter xylanophilus (strain DSM 9941 / JCM 11954 / NBRC 16129 / PRD-1).